Consider the following 61-residue polypeptide: Large ribosomal subunit protein bL28 (61 aa).

The protein belongs to the bacterial ribosomal protein bL28 family.

In Geobacillus stearothermophilus (Bacillus stearothermophilus), this protein is Large ribosomal subunit protein bL28 (rpmB).